A 159-amino-acid polypeptide reads, in one-letter code: uncharacterized protein (159 aa).

3 consecutive transmembrane segments (helical) span residues 76-96, 104-124, and 131-151; these read AIKYLIEGLAVAFVAYYFIGK, IVMLGITAACVFAILDVFSPT, and FGAGFGIGTSLFGLNPAVIGG.

The protein localises to the membrane. This is an uncharacterized protein from Acanthamoeba polyphaga (Amoeba).